Reading from the N-terminus, the 1161-residue chain is DNA-directed RNA polymerase subunit beta (1161 aa).

This sequence belongs to the RNA polymerase beta chain family. As to quaternary structure, the RNAP catalytic core consists of 2 alpha, 1 beta, 1 beta' and 1 omega subunit. When a sigma factor is associated with the core the holoenzyme is formed, which can initiate transcription. The RNAP complex including the principal sigma factor HrdB also interacts with RNA-binding protein RbpA.

It catalyses the reaction RNA(n) + a ribonucleoside 5'-triphosphate = RNA(n+1) + diphosphate. DNA-dependent RNA polymerase catalyzes the transcription of DNA into RNA using the four ribonucleoside triphosphates as substrates. In Streptomyces coelicolor (strain ATCC BAA-471 / A3(2) / M145), this protein is DNA-directed RNA polymerase subunit beta.